Reading from the N-terminus, the 569-residue chain is Probable diguanylate cyclase DgcQ (569 aa).

2 consecutive transmembrane segments (helical) span residues 25-45 and 365-385; these read LGPG…STLL and IALT…WYVI. Residues 433 to 568 enclose the GGDEF domain; that stretch reads HPFSVIQVDL…GRNRVCASDN (136 aa). Asp-441 serves as a coordination point for Mg(2+). Substrate is bound by residues Asn-449, His-454, and Asp-458. Glu-484 provides a ligand contact to Mg(2+). Glu-484 acts as the Proton acceptor in catalysis.

Homodimer. Mg(2+) is required as a cofactor.

The protein localises to the cell inner membrane. The enzyme catalyses 2 GTP = 3',3'-c-di-GMP + 2 diphosphate. It functions in the pathway glycan metabolism; bacterial cellulose biosynthesis. The protein operates within purine metabolism; 3',5'-cyclic di-GMP biosynthesis. In terms of biological role, catalyzes the synthesis of cyclic-di-GMP (c-di-GMP) via the condensation of 2 GTP molecules. Cyclic-di-GMP is a second messenger which controls cell surface-associated traits in bacteria. Involved in the regulation of cellulose production. This is Probable diguanylate cyclase DgcQ from Shigella sonnei (strain Ss046).